We begin with the raw amino-acid sequence, 202 residues long: Imidazoleglycerol-phosphate dehydratase (202 aa).

This sequence belongs to the imidazoleglycerol-phosphate dehydratase family.

It is found in the cytoplasm. The catalysed reaction is D-erythro-1-(imidazol-4-yl)glycerol 3-phosphate = 3-(imidazol-4-yl)-2-oxopropyl phosphate + H2O. It functions in the pathway amino-acid biosynthesis; L-histidine biosynthesis; L-histidine from 5-phospho-alpha-D-ribose 1-diphosphate: step 6/9. The protein is Imidazoleglycerol-phosphate dehydratase of Corynebacterium diphtheriae (strain ATCC 700971 / NCTC 13129 / Biotype gravis).